Here is a 325-residue protein sequence, read N- to C-terminus: ATP-dependent (S)-NAD(P)H-hydrate dehydratase (325 aa).

The YjeF C-terminal domain occupies 9–315; the sequence is LLKKVYNMVP…EHVHTAFLNV (307 aa). Residues G119 and 172–178 contribute to the (6S)-NADPHX site; that span reads NVVEFGR. ATP contacts are provided by residues 211–215 and 230–239; these read KGAKD and GGLKRSGGQG. D240 is a binding site for (6S)-NADPHX.

Belongs to the NnrD/CARKD family. Requires Mg(2+) as cofactor.

The protein resides in the cytoplasm. The catalysed reaction is (6S)-NADHX + ATP = ADP + phosphate + NADH + H(+). The enzyme catalyses (6S)-NADPHX + ATP = ADP + phosphate + NADPH + H(+). Functionally, catalyzes the dehydration of the S-form of NAD(P)HX at the expense of ATP, which is converted to ADP. Together with NAD(P)HX epimerase, which catalyzes the epimerization of the S- and R-forms, the enzyme allows the repair of both epimers of NAD(P)HX, a damaged form of NAD(P)H that is a result of enzymatic or heat-dependent hydration. The polypeptide is ATP-dependent (S)-NAD(P)H-hydrate dehydratase (Phaeosphaeria nodorum (strain SN15 / ATCC MYA-4574 / FGSC 10173) (Glume blotch fungus)).